A 176-amino-acid polypeptide reads, in one-letter code: 3-hydroxyanthranilate 3,4-dioxygenase (176 aa).

Arg44 is an O2 binding site. Fe cation-binding residues include His48, Glu54, and His92. A substrate-binding site is contributed by Glu54. Positions 96 and 106 each coordinate substrate. Fe cation-binding residues include Cys121, Cys124, Cys158, and Cys161.

This sequence belongs to the 3-HAO family. In terms of assembly, homodimer. Fe(2+) is required as a cofactor.

The catalysed reaction is 3-hydroxyanthranilate + O2 = (2Z,4Z)-2-amino-3-carboxymuconate 6-semialdehyde. The protein operates within cofactor biosynthesis; NAD(+) biosynthesis; quinolinate from L-kynurenine: step 3/3. Catalyzes the oxidative ring opening of 3-hydroxyanthranilate to 2-amino-3-carboxymuconate semialdehyde, which spontaneously cyclizes to quinolinate. This chain is 3-hydroxyanthranilate 3,4-dioxygenase, found in Xanthomonas oryzae pv. oryzae (strain MAFF 311018).